We begin with the raw amino-acid sequence, 257 residues long: Granzyme M (257 aa).

A signal peptide spans 1–23 (MEACVSSLLVLALGALSVGSSFG). The propeptide at 24–25 (TQ) is activation peptide. Residues 26–254 (IIGGREVIPH…YVSWIRKVTG (229 aa)) enclose the Peptidase S1 domain. Residues Cys51 and Cys67 are joined by a disulfide bond. Catalysis depends on charge relay system residues His66 and Asp111. Intrachain disulfides connect Cys145/Cys213, Cys176/Cys192, and Cys203/Cys230. N-linked (GlcNAc...) asparagine glycosylation is present at Asn177. Ser207 functions as the Charge relay system in the catalytic mechanism.

The protein belongs to the peptidase S1 family. Granzyme subfamily. As to expression, highly and constitutively expressed in activated natural killer (NK) cells.

It localises to the secreted. The protein localises to the cytoplasmic granule. Cleaves peptide substrates after methionine, leucine, and norleucine. Physiological substrates include EZR, alpha-tubulins and the apoptosis inhibitor BIRC5/Survivin. Promotes caspase activation and subsequent apoptosis of target cells. This is Granzyme M (GZMM) from Homo sapiens (Human).